The primary structure comprises 280 residues: Urease accessory protein UreD 1 (280 aa).

Belongs to the UreD family. As to quaternary structure, ureD, UreF and UreG form a complex that acts as a GTP-hydrolysis-dependent molecular chaperone, activating the urease apoprotein by helping to assemble the nickel containing metallocenter of UreC. The UreE protein probably delivers the nickel.

Its subcellular location is the cytoplasm. Its function is as follows. Required for maturation of urease via the functional incorporation of the urease nickel metallocenter. In Bradyrhizobium sp. (strain BTAi1 / ATCC BAA-1182), this protein is Urease accessory protein UreD 1.